Here is an 81-residue protein sequence, read N- to C-terminus: Short neurotoxin 2 (81 aa).

Residues 1–21 form the signal peptide; it reads MKTLLLTLVVVTIVCLDLGYT. 4 disulfides stabilise this stretch: Cys24–Cys43, Cys38–Cys60, Cys62–Cys73, and Cys74–Cys79.

This sequence belongs to the three-finger toxin family. Short-chain subfamily. Type I alpha-neurotoxin sub-subfamily. Expressed by the venom gland.

Its subcellular location is the secreted. In terms of biological role, binds to muscle nicotinic acetylcholine receptor (nAChR) and inhibit acetylcholine from binding to the receptor, thereby impairing neuromuscular transmission. The chain is Short neurotoxin 2 from Tropidechis carinatus (Australian rough-scaled snake).